The primary structure comprises 30 residues: Hainantoxin F6-34.84 (30 aa).

2 cysteine pairs are disulfide-bonded: Cys2–Cys15 and Cys9–Cys24.

The protein belongs to the AVIT (prokineticin) family. As to expression, expressed by the venom gland.

It is found in the secreted. This is Hainantoxin F6-34.84 from Cyriopagopus hainanus (Chinese bird spider).